The following is an 814-amino-acid chain: Pre-rRNA-processing protein TSR1 homolog (814 aa).

Residues 1-67 (MADHAFHRPG…NQMNQLRKNK (67 aa)) form a disordered region. Basic residues predominate over residues 16–27 (NKAHKTGRHRSK). A Bms1-type G domain is found at 84-249 (APFLVCLLPM…MRRIGGQKKR (166 aa)). Disordered regions lie at residues 316 to 357 (PYKL…DAEQ) and 392 to 448 (WIPD…EEFQ). Residues 317–340 (YKLDKSRDGENSEVRLLDRSDPSK) are compositionally biased toward basic and acidic residues. Residues 395 to 426 (DVEEVEDPDGKDDDDMSEDDDDDKEDDNEDFM) show a composition bias toward acidic residues. The span at 431–442 (KSFEDEYEKRDS) shows a compositional bias: basic and acidic residues. At T444 the chain carries Phosphothreonine.

It belongs to the TRAFAC class translation factor GTPase superfamily. Bms1-like GTPase family. TSR1 subfamily.

The protein localises to the nucleus. It localises to the nucleolus. In terms of biological role, required during maturation of the 40S ribosomal subunit in the nucleolus. In Drosophila melanogaster (Fruit fly), this protein is Pre-rRNA-processing protein TSR1 homolog.